A 274-amino-acid chain; its full sequence is Thiamine kinase (274 aa).

It belongs to the thiamine kinase family.

The catalysed reaction is thiamine + ATP = thiamine phosphate + ADP + H(+). Its pathway is cofactor biosynthesis; thiamine diphosphate biosynthesis; thiamine phosphate from thiamine: step 1/1. Its function is as follows. Catalyzes the ATP-dependent phosphorylation of thiamine to thiamine phosphate. Is involved in thiamine salvage. The protein is Thiamine kinase of Shigella dysenteriae serotype 1 (strain Sd197).